The primary structure comprises 827 residues: Inactive rhomboid protein 2 (827 aa).

Residues 1–87 (MDSTDKNGES…GFRRQASLSQ (87 aa)) form a disordered region. At 1 to 380 (MDSTDKNGES…HRPYFTYWLT (380 aa)) the chain is on the cytoplasmic side. Residue serine 60 is modified to Phosphoserine. Basic and acidic residues predominate over residues 64 to 77 (QRGRWQEGSSEKRP). A phosphoserine mark is found at serine 84, serine 88, serine 294, serine 296, and serine 299. A helical transmembrane segment spans residues 381–401 (FVHIIITLLVICTYGIAPVGF). The Lumenal portion of the chain corresponds to 402–631 (AQHVTTQLVL…PDQFYRLWLS (230 aa)). A helical membrane pass occupies residues 632–652 (LFLHAGVVHCLVSVVFQMTIL). The Cytoplasmic portion of the chain corresponds to 653-663 (RDLEKLAGWHR). Residues 664-684 (IAIIFILSGITGNLASAIFLP) traverse the membrane as a helical segment. Residues 685–686 (YR) lie on the Lumenal side of the membrane. The chain crosses the membrane as a helical span at residues 687–707 (AEVGPAGSQFGLLACLFVELF). The Cytoplasmic portion of the chain corresponds to 708–718 (QSWQLLERPWK). Residues 719-739 (AFLNLSAIVLFLFICGLLPWI) form a helical membrane-spanning segment. Over 740-744 (DNIAH) the chain is Lumenal. Residues 745-765 (IFGFLSGLLLAFAFLPYITFG) form a helical membrane-spanning segment. Over 766-773 (TSDKYRKR) the chain is Cytoplasmic. Residues 774 to 794 (ALILVSLLVFAGLFASLVIWL) traverse the membrane as a helical segment. The Lumenal portion of the chain corresponds to 795-827 (YVYPINWPWIEYLTCFPFTSRFCEKYELDQVLH).

The protein belongs to the peptidase S54 family. Interacts with EGF. Interacts (via cytoplasmic N-terminus) with FRMD8/iTAP; this interaction leads to mutual protein stabilization. Interacts with ADAM17/TACE. In terms of tissue distribution, detected in retina and spleen.

The protein localises to the endoplasmic reticulum membrane. The protein resides in the cell membrane. Its function is as follows. Regulates ADAM17 protease, a sheddase of the epidermal growth factor (EGF) receptor ligands and TNF, thereby plays a role in sleep, cell survival, proliferation, migration and inflammation. Does not exhibit any protease activity on its own. The sequence is that of Inactive rhomboid protein 2 (RHBDF2) from Canis lupus familiaris (Dog).